Consider the following 213-residue polypeptide: Orotate phosphoribosyltransferase (213 aa).

Residue Lys26 participates in 5-phospho-alpha-D-ribose 1-diphosphate binding. Residue 34 to 35 coordinates orotate; that stretch reads FF. 5-phospho-alpha-D-ribose 1-diphosphate is bound by residues 72-73, Arg99, Lys100, Lys103, His105, and 124-132; these read YK and DDVITAGTA. 2 residues coordinate orotate: Thr128 and Arg156.

This sequence belongs to the purine/pyrimidine phosphoribosyltransferase family. PyrE subfamily. As to quaternary structure, homodimer. It depends on Mg(2+) as a cofactor.

The catalysed reaction is orotidine 5'-phosphate + diphosphate = orotate + 5-phospho-alpha-D-ribose 1-diphosphate. Its pathway is pyrimidine metabolism; UMP biosynthesis via de novo pathway; UMP from orotate: step 1/2. Catalyzes the transfer of a ribosyl phosphate group from 5-phosphoribose 1-diphosphate to orotate, leading to the formation of orotidine monophosphate (OMP). The sequence is that of Orotate phosphoribosyltransferase from Pseudomonas aeruginosa (strain UCBPP-PA14).